The primary structure comprises 45 residues: Myotoxin-3 (45 aa).

3 cysteine pairs are disulfide-bonded: Cys-4–Cys-36, Cys-11–Cys-30, and Cys-18–Cys-37.

Monomer. In terms of tissue distribution, expressed by the venom gland.

It is found in the secreted. Cationic peptide that possesses multiple functions. It acts as a cell-penetrating peptide (CPP), and as a potent voltage-gated potassium channel (Kv) inhibitor. It exhibits antimicrobial activities, hind limb paralysis, and severe muscle necrosis by a non-enzymatic mechanism. The protein is Myotoxin-3 of Crotalus viridis viridis (Prairie rattlesnake).